We begin with the raw amino-acid sequence, 114 residues long: UPF0342 protein LCABL_19440 (114 aa).

This sequence belongs to the UPF0342 family.

The chain is UPF0342 protein LCABL_19440 from Lacticaseibacillus casei (strain BL23) (Lactobacillus casei).